The following is a 312-amino-acid chain: Ribosomal RNA small subunit methyltransferase H (312 aa).

S-adenosyl-L-methionine is bound by residues 35–37 (GGH), Asp-55, Phe-79, Asp-100, and Gln-107.

The protein belongs to the methyltransferase superfamily. RsmH family.

The protein localises to the cytoplasm. The catalysed reaction is cytidine(1402) in 16S rRNA + S-adenosyl-L-methionine = N(4)-methylcytidine(1402) in 16S rRNA + S-adenosyl-L-homocysteine + H(+). Its function is as follows. Specifically methylates the N4 position of cytidine in position 1402 (C1402) of 16S rRNA. This Azoarcus sp. (strain BH72) protein is Ribosomal RNA small subunit methyltransferase H.